Consider the following 336-residue polypeptide: Fructose-1,6-bisphosphatase class 1 (336 aa).

4 residues coordinate Mg(2+): glutamate 92, aspartate 115, leucine 117, and aspartate 118. Residues aspartate 118 to serine 121, asparagine 211, tyrosine 244, tyrosine 262 to tyrosine 264, and lysine 274 each bind substrate. Glutamate 280 is a Mg(2+) binding site.

It belongs to the FBPase class 1 family. In terms of assembly, homotetramer. The cofactor is Mg(2+).

It is found in the cytoplasm. It catalyses the reaction beta-D-fructose 1,6-bisphosphate + H2O = beta-D-fructose 6-phosphate + phosphate. Its pathway is carbohydrate biosynthesis; gluconeogenesis. The polypeptide is Fructose-1,6-bisphosphatase class 1 (Vibrio cholerae serotype O1 (strain ATCC 39541 / Classical Ogawa 395 / O395)).